A 347-amino-acid polypeptide reads, in one-letter code: Selenide, water dikinase (347 aa).

The active site involves Cys-17. Residues Lys-20 and 48 to 50 each bind ATP; that span reads TRD. Mg(2+) is bound at residue Asp-51. ATP contacts are provided by residues Asp-68, Asp-91, and 139–141; that span reads GHS. Asp-91 provides a ligand contact to Mg(2+). A Mg(2+)-binding site is contributed by Asp-227.

This sequence belongs to the selenophosphate synthase 1 family. Class I subfamily. In terms of assembly, homodimer. Mg(2+) serves as cofactor.

The enzyme catalyses hydrogenselenide + ATP + H2O = selenophosphate + AMP + phosphate + 2 H(+). Its function is as follows. Synthesizes selenophosphate from selenide and ATP. This chain is Selenide, water dikinase, found in Salmonella typhimurium (strain LT2 / SGSC1412 / ATCC 700720).